Reading from the N-terminus, the 262-residue chain is Tetrahydromethanopterin S-methyltransferase subunit C (262 aa).

Transmembrane regions (helical) follow at residues 27 to 47, 72 to 92, 98 to 118, 145 to 165, 173 to 193, 200 to 220, and 222 to 242; these read LVGIYIAHFFPSLAMLLGGLL, PSIGMVSLGMGTISALAGVLI, LPVLVTPILAAVIAVVVGFIV, ALAILGFCTAFAGGFSADIII, VIALAFIAAGMAILHPFNACI, KRTMTLAVACGFMAWLVFAIA, and LDIVSTAVAAIFWFIAYGTFV.

Belongs to the MtrC family. In terms of assembly, the complex is composed of 8 subunits; MtrA, MtrB, MtrC, MtrD, MtrE, MtrF, MtrG and MtrH.

The protein localises to the cell membrane. The catalysed reaction is 5-methyl-5,6,7,8-tetrahydromethanopterin + coenzyme M + 2 Na(+)(in) = 5,6,7,8-tetrahydromethanopterin + methyl-coenzyme M + 2 Na(+)(out). Its pathway is one-carbon metabolism; methanogenesis from CO(2); methyl-coenzyme M from 5,10-methylene-5,6,7,8-tetrahydromethanopterin: step 2/2. Part of a complex that catalyzes the formation of methyl-coenzyme M and tetrahydromethanopterin from coenzyme M and methyl-tetrahydromethanopterin. This is an energy-conserving, sodium-ion translocating step. The polypeptide is Tetrahydromethanopterin S-methyltransferase subunit C (Methanococcus maripaludis (strain C5 / ATCC BAA-1333)).